Here is a 307-residue protein sequence, read N- to C-terminus: Protein pxr1 (307 aa).

Residues 1–11 (MGLAAPRKKTK) show a composition bias toward basic residues. Disordered stretches follow at residues 1–25 (MGLA…SRST) and 144–234 (NATA…SDCD). Polar residues predominate over residues 15-25 (DPNNTSWSRST). The 55-residue stretch at 25 to 79 (TDGFGHRILKAQGWTPGGFLGARNATHSDLFTTASASHIRVVLKDDTLGLGARPK) folds into the G-patch domain. Basic and acidic residues-rich tracts occupy residues 154-168 (LRVD…HESE) and 206-221 (GKEL…EKKQ).

This sequence belongs to the PINX1 family.

The protein localises to the nucleus. Its subcellular location is the nucleolus. In terms of biological role, involved in rRNA-processing at A0, A1 and A2 sites and negatively regulates telomerase. This chain is Protein pxr1 (pxr1), found in Neosartorya fischeri (strain ATCC 1020 / DSM 3700 / CBS 544.65 / FGSC A1164 / JCM 1740 / NRRL 181 / WB 181) (Aspergillus fischerianus).